The chain runs to 166 residues: Large ribosomal subunit protein uL10 (166 aa).

It belongs to the universal ribosomal protein uL10 family. Part of the ribosomal stalk of the 50S ribosomal subunit. The N-terminus interacts with L11 and the large rRNA to form the base of the stalk. The C-terminus forms an elongated spine to which L12 dimers bind in a sequential fashion forming a multimeric L10(L12)X complex.

In terms of biological role, forms part of the ribosomal stalk, playing a central role in the interaction of the ribosome with GTP-bound translation factors. This is Large ribosomal subunit protein uL10 from Bacillus cereus (strain 03BB102).